The primary structure comprises 148 residues: MKIINILFCLFLLMLNGCNSNDNDTLKNNAQQTKSRRKRDLTQKEVTQEKPKSKEELLREKLNDDQKTQLDWLKTALTDAGEFDKFLENNEDKIKSALDHIKSELDKCNGKENGDVQKNTFKQVVQGALKGGIDGFGASNATTTCNGS.

Positions 1 to 17 are cleaved as a signal peptide; that stretch reads MKIINILFCLFLLMLNG. C18 carries the N-palmitoyl cysteine lipid modification. C18 carries the S-diacylglycerol cysteine lipid modification. Residues 26-61 form a disordered region; sequence LKNNAQQTKSRRKRDLTQKEVTQEKPKSKEELLREK. Residues 40–61 are compositionally biased toward basic and acidic residues; that stretch reads DLTQKEVTQEKPKSKEELLREK.

It belongs to the Multicopy lipoprotein (Mlp) family.

The protein resides in the cell outer membrane. In terms of biological role, an outer membrane protein that may participate in pathogenesis. Some human Lyme disease patients have antibodies against this protein. The Mlp proteins probably undergo intragenic recombination, generating new alleles. The polypeptide is Lipoprotein MlpH (Borreliella burgdorferi (strain ATCC 35210 / DSM 4680 / CIP 102532 / B31) (Borrelia burgdorferi)).